The sequence spans 620 residues: Transcription factor GTE11 (620 aa).

The tract at residues 1–35 (MTVRNGGFPGDYNRNSFDSPGGCDDSPNASKDDET) is disordered. Residues 124 to 230 (TSTMLRMKQC…KFFEVRWKTI (107 aa)) form the Bromo domain. The NET domain maps to 270-351 (NSLLEPAKRV…EFLRENQKKD (82 aa)). S417 bears the Phosphoserine mark. A transcription activation domain region spans residues 445-620 (EKRYRAALLK…GNEVEEGEID (176 aa)). The stretch at 470–544 (NQNEKRDPET…MEKSVEINEN (75 aa)) forms a coiled coil. Disordered stretches follow at residues 491 to 511 (KKKE…ARRK) and 597 to 620 (EDED…GEID).

As to quaternary structure, interacts with BT1, BT2 and BT4.

It is found in the nucleus. The sequence is that of Transcription factor GTE11 (GTE11) from Arabidopsis thaliana (Mouse-ear cress).